Reading from the N-terminus, the 34-residue chain is Calcitonin-like peptide 1 (34 aa).

The cysteines at positions 2 and 7 are disulfide-linked. Pro-34 is modified (proline amide).

This chain is Calcitonin-like peptide 1, found in Odorrana schmackeri (Schmacker's frog).